The sequence spans 571 residues: Urease subunit alpha (571 aa).

The Urease domain occupies 133 to 571 (AGIDTHIHFI…VALNQRYFFS (439 aa)). Residues H138, H140, and K221 each coordinate Ni(2+). An N6-carboxylysine modification is found at K221. H223 contributes to the substrate binding site. Ni(2+)-binding residues include H250 and H276. H324 acts as the Proton donor in catalysis. D364 contacts Ni(2+).

The protein belongs to the metallo-dependent hydrolases superfamily. Urease alpha subunit family. As to quaternary structure, heterotrimer of UreA (gamma), UreB (beta) and UreC (alpha) subunits. Three heterotrimers associate to form the active enzyme. The cofactor is Ni cation. Carboxylation allows a single lysine to coordinate two nickel ions.

It localises to the cytoplasm. It carries out the reaction urea + 2 H2O + H(+) = hydrogencarbonate + 2 NH4(+). The protein operates within nitrogen metabolism; urea degradation; CO(2) and NH(3) from urea (urease route): step 1/1. The polypeptide is Urease subunit alpha (Photorhabdus laumondii subsp. laumondii (strain DSM 15139 / CIP 105565 / TT01) (Photorhabdus luminescens subsp. laumondii)).